A 441-amino-acid chain; its full sequence is Tryptophan aminotransferase-related protein 1 (441 aa).

Pyridoxal 5'-phosphate-binding positions include Y110, 152 to 153, N219, 239 to 242, 262 to 265, and R273; these read ST, DLAY, and TVSK. K265 is subject to N6-(pyridoxal phosphate)lysine.

The protein belongs to the alliinase family. Requires pyridoxal 5'-phosphate as cofactor. Highly expressed in anthers. Expressed at low levels in ovaries.

It catalyses the reaction L-tryptophan + 2-oxoglutarate = indole-3-pyruvate + L-glutamate. It participates in plant hormone metabolism; auxin biosynthesis. In terms of biological role, probable tryptophan aminotransferase that may be involved in the regulation of auxin production in developing rice grains. The protein is Tryptophan aminotransferase-related protein 1 of Oryza sativa subsp. japonica (Rice).